We begin with the raw amino-acid sequence, 314 residues long: MRPSSYNQRTLSKIASLQGVGLHSGARVTLTLRPAPPGHGIVFVRTDLARPVSIPALAEYVVDTSLATTLGRDGVRVGTVEHLMAALAGMGIDNLRVELDGPEVPIMDGSAAPFAALIQSAGVREQEAPKELLVIRKAVSVVDGDKQASLTPARHFRISCTIDFEHPVIQGQSFDLDFGDRDFAREISRARTFGFLRDVEKLKQMGLARGGSLENAIVVDEVSILNPDGLRFPDEFVRHKILDAIGDVSLFGRPVIGHMTAYKTGHALNHKLVRKVMSDPSCYEIVPARRRELEGMGLGFSGLAGALDFEPLVA.

Residues histidine 82, histidine 239, and aspartate 243 each coordinate Zn(2+). Histidine 266 (proton donor) is an active-site residue.

Belongs to the LpxC family. Zn(2+) serves as cofactor.

The catalysed reaction is a UDP-3-O-[(3R)-3-hydroxyacyl]-N-acetyl-alpha-D-glucosamine + H2O = a UDP-3-O-[(3R)-3-hydroxyacyl]-alpha-D-glucosamine + acetate. The protein operates within glycolipid biosynthesis; lipid IV(A) biosynthesis; lipid IV(A) from (3R)-3-hydroxytetradecanoyl-[acyl-carrier-protein] and UDP-N-acetyl-alpha-D-glucosamine: step 2/6. Functionally, catalyzes the hydrolysis of UDP-3-O-myristoyl-N-acetylglucosamine to form UDP-3-O-myristoylglucosamine and acetate, the committed step in lipid A biosynthesis. The chain is UDP-3-O-acyl-N-acetylglucosamine deacetylase from Myxococcus xanthus (strain DK1622).